Reading from the N-terminus, the 862-residue chain is MKVTTVKELDEKLKVIKEAQKKFSCYSQEMVDEIFRNAAMAAIDARIELAKAAVLETGMGLVEDKVIKNHFAGEYIYNKYKDEKTCGIIERNEPYGITKIAEPIGVVAAIIPVTNPTSTTIFKSLISLKTRNGIFFSPHPRAKKSTILAAKTILDAAVKSGAPENIIGWIDEPSIELTQYLMQKADITLATGGPSLVKSAYSSGKPAIGVGPGNTPVIIDESAHIKMAVSSIILSKTYDNGVICASEQSVIVLKSIYNKVKDEFQERGAYIIKKNELDKVREVIFKDGSVNPKIVGQSAYTIAAMAGIKVPKTTRILIGEVTSLGEEEPFAHEKLSPVLAMYEADNFDDALKKAVTLINLGGLGHTSGIYADEIKARDKIDRFSSAMKTVRTFVNIPTSQGASGDLYNFRIPPSFTLGCGFWGGNSVSENVGPKHLLNIKTVAERRENMLWFRVPHKVYFKFGCLQFALKDLKDLKKKRAFIVTDSDPYNLNYVDSIIKILEHLDIDFKVFNKVGREADLKTIKKATEEMSSFMPDTIIALGGTPEMSSAKLMWVLYEHPEVKFEDLAIKFMDIRKRIYTFPKLGKKAMLVAITTSAGSGSEVTPFALVTDNNTGNKYMLADYEMTPNMAIVDAELMMKMPKGLTAYSGIDALVNSIEAYTSVYASEYTNGLALEAIRLIFKYLPEAYKNGRTNEKAREKMAHASTMAGMASANAFLGLCHSMAIKLSSEHNIPSGIANALLIEEVIKFNAVDNPVKQAPCPQYKYPNTIFRYARIADYIKLGGNTDEEKVDLLINKIHELKKALNIPTSIKDAGVLEENFYSSLDRISELALDDQCTGANPRFPLTSEIKEMYINCFKKQP.

Residue cysteine 244 is part of the active site. 420 to 425 (GFWGGN) provides a ligand contact to NAD(+).

In the N-terminal section; belongs to the aldehyde dehydrogenase family. This sequence in the C-terminal section; belongs to the iron-containing alcohol dehydrogenase family.

The enzyme catalyses a primary alcohol + NAD(+) = an aldehyde + NADH + H(+). The catalysed reaction is a secondary alcohol + NAD(+) = a ketone + NADH + H(+). It carries out the reaction an aldehyde + NAD(+) + H2O = a carboxylate + NADH + 2 H(+). In terms of biological role, has both aldehyde and alcohol dehydrogenase activities. Can use acetaldehyde, butyraldehyde, butanol and ethanol. This Clostridium acetobutylicum (strain ATCC 824 / DSM 792 / JCM 1419 / IAM 19013 / LMG 5710 / NBRC 13948 / NRRL B-527 / VKM B-1787 / 2291 / W) protein is Aldehyde-alcohol dehydrogenase.